The chain runs to 308 residues: Glutamyl-Q tRNA(Asp) synthetase (308 aa).

L-glutamate is bound by residues 19–23 (RFAPS) and Glu55. The short motif at 22–32 (PSPSGELHFGS) is the 'HIGH' region element. Zn(2+) contacts are provided by Cys111, Cys113, Tyr125, and Cys129. The L-glutamate site is built by Tyr182 and Arg200. A 'KMSKS' region motif is present at residues 238-242 (KLSKQ). Residue Lys241 coordinates ATP.

Belongs to the class-I aminoacyl-tRNA synthetase family. GluQ subfamily. The cofactor is Zn(2+).

Catalyzes the tRNA-independent activation of glutamate in presence of ATP and the subsequent transfer of glutamate onto a tRNA(Asp). Glutamate is transferred on the 2-amino-5-(4,5-dihydroxy-2-cyclopenten-1-yl) moiety of the queuosine in the wobble position of the QUC anticodon. In Shigella flexneri, this protein is Glutamyl-Q tRNA(Asp) synthetase.